The sequence spans 259 residues: tRNA pseudouridine synthase A (259 aa).

The active-site Nucleophile is the Asp52. Tyr113 contributes to the substrate binding site.

This sequence belongs to the tRNA pseudouridine synthase TruA family. As to quaternary structure, homodimer.

It catalyses the reaction uridine(38/39/40) in tRNA = pseudouridine(38/39/40) in tRNA. Functionally, formation of pseudouridine at positions 38, 39 and 40 in the anticodon stem and loop of transfer RNAs. The polypeptide is tRNA pseudouridine synthase A (Allorhizobium ampelinum (strain ATCC BAA-846 / DSM 112012 / S4) (Agrobacterium vitis (strain S4))).